The sequence spans 133 residues: Ribosome-binding factor A (133 aa).

This sequence belongs to the RbfA family. Monomer. Binds 30S ribosomal subunits, but not 50S ribosomal subunits or 70S ribosomes.

The protein localises to the cytoplasm. Functionally, one of several proteins that assist in the late maturation steps of the functional core of the 30S ribosomal subunit. Associates with free 30S ribosomal subunits (but not with 30S subunits that are part of 70S ribosomes or polysomes). Required for efficient processing of 16S rRNA. May interact with the 5'-terminal helix region of 16S rRNA. This chain is Ribosome-binding factor A, found in Nostoc sp. (strain PCC 7120 / SAG 25.82 / UTEX 2576).